The following is a 351-amino-acid chain: MKQEPHRQSEEKEKPKGPMAVEREHHTSLSSGTTMTASTGDESTNSRPVESSQTEKSLSLRIRILKQLGFDDIQELNACDTGLVEQFLNVRLINDTKELEKIRESNLAKLNQIIDKCMESDKISDSTLNKILDMSMNRDTNNDNNNHLTIPSPITTKKRKINASELASPRGHRRYRSDIPTVSEVETGVGYPQIHQQPGAYTLPMPANQWMSNPYMQPPQPQVQQIMPQYLYPPGMGPQAQLPTMSSNSESQTPVMSSQFLSLNQHGLYQQNIGAHPVMSMGPQANIYGQQHQPQPGQERDQSRKSFSHRRSQSANISMANFRSPMRNPQPASSQRPVNFLIHTPKHPPPT.

The segment covering 1-27 (MKQEPHRQSEEKEKPKGPMAVEREHHT) has biased composition (basic and acidic residues). The segment at 1-56 (MKQEPHRQSEEKEKPKGPMAVEREHHTSLSSGTTMTASTGDESTNSRPVESSQTEK) is disordered. Polar residues predominate over residues 28 to 56 (SLSSGTTMTASTGDESTNSRPVESSQTEK). A phosphoserine mark is found at Ser-152 and Ser-168. Disordered stretches follow at residues 237-256 (GPQA…TPVM) and 280-351 (SMGP…PPPT). 2 stretches are compositionally biased toward polar residues: residues 241-256 (QLPT…TPVM) and 287-296 (IYGQQHQPQP). Ser-314 is modified (phosphoserine).

The protein belongs to the POG1 family. Post-translationally, phosphorylated by CDC28.

The protein resides in the nucleus. Its function is as follows. Transcriptional activator which promotes cell cycle recovery with CLN2, after pheromone induced G1 arrest, probably inhibiting the ability of STE20 to activate the pheromone response pathway. Binds the promoters of genes that function in cell cycle regulation, cytoskeletal organization, and spindle assembly. May also be involved in stress-resistance. The polypeptide is Transcriptional activator POG1 (POG1) (Saccharomyces cerevisiae (strain YJM789) (Baker's yeast)).